The sequence spans 453 residues: MANVVLDGSAAPAKAGLPLDLSSPSKQTNFPTELESNSNADFWWRLCRPEMAGLFKQAGGYTELQQESHLRFVREHCAPWMGTVPTGHMANEAVAPVEMSVNYISSRDEGVLRFQMEPFTAVSGPHTQADDPSGKKAVCSMLRSFQHALGDVDLTWTWQLVDKFMVTAPDEVARLREAERTSLPPPLDLYQRTPQFNFAFDLSPDKKSMKTYFLPLAKSLVTGSSALDYCLDAVRSLEPHGEGLSPVADLLHQFFNTSCPGHMSCDYLGIDSTNPKRSRVKLYVSSQQHNSFNFIRAVFTLGGIAKDEATLRGLEFLRSIWHLLVNVDEGELPDSSDRPAKQLPFFLGCLYFSFEWRAGDRLPLVKLYVPQWQYAQSDRKIAKNISASLRKLGRDEAADEYLTHIKQTFPRADLDGNVSIHNQVSYAYSAETGAYLTIYYSVNSKAVARDQIY.

Position 95-96 (95-96 (AP)) interacts with L-tryptophan. Residues K210, Y212, R279, K281, Y283, Y368, and Y435 each contribute to the substrate site.

This sequence belongs to the tryptophan dimethylallyltransferase family.

It functions in the pathway mycotoxin biosynthesis. In terms of biological role, O-glucose prenyltransferase; part of the 2 gene clusters that mediate the biosynthesis of fusicoccins, diterpene glucosides that display phytohormone-like activity and function as potent activators of plasma membrane H(+)-ATPases in plants by modifying 14-3-3 proteins and cause the plant disease constriction canker. The first step in the pathway is performed by the fusicoccadiene synthase PaFS that possesses both prenyl transferase and terpene cyclase activity, converting isopentenyl diphosphate and dimethylallyl diphosphate into geranylgeranyl diphosphate (GGDP) and successively converting GGDP into fusicocca-2,10(14)-diene, a precursor for fusicoccin H. The second step is the oxidation at the C-8 position by the cytochrome P450 monooxygenase PaP450-2 to yield fusicocca-2,10(14)-diene-8-beta-ol. The cytochrome P450 monooxygenase PaP450-1 then catalyzes the hydroxylation at the C-16 position to produce fusicocca-2,10(14)-diene-8-beta,16-diol. The dioxygenase fc-dox then catalyzes the 16-oxydation of fusicocca-2,10(14)-diene-8-beta,16-diol to yield an aldehyde (8-beta-hydroxyfusicocca-1,10(14)-dien-16-al). The short-chain dehydrogenase/reductase fc-sdr catalyzes the reduction of the aldehyde to yield fusicocca-1,10(14)-diene-8-beta,16-diol. The next step is the hydroxylation at C-9 performed by the cytochrome P450 monooxygenase PaP450-3 that leads to fusicoccin H aglycon which is glycosylated to fusicoccin H by the O-glycosyltransferase PaGT. Hydroxylation at C-12 by the cytochrome P450 monooxygenase PaP450-4 leads then to the production of fusicoccin Q and is followed by methylation by the O-methyltransferase PaMT to yield fusicoccin P. Fusicoccin P is further converted to fusicoccin J via prenylation by the O-glucose prenyltransferase PaPT. Cytochrome P450 monooxygenase PaP450-5 then performs hydroxylation at C-19 to yield dideacetyl-fusicoccin A which is acetylated to 3'-O-deacetyl-fusicoccin A by the O-acetyltransferase PaAT-2. Finally, a another acetylation by the O-acetyltransferase PaAT-1 yields fusicoccin A. The polypeptide is O-glucose prenyltransferase PaPT (Phomopsis amygdali (Fusicoccum amygdali)).